Here is a 145-residue protein sequence, read N- to C-terminus: Basic phospholipase A2 KPA2 (145 aa).

Residues 1–19 form the signal peptide; the sequence is MYPAHLLVLVAVCVSLLGA. Residues 20–27 constitute a propeptide that is removed on maturation; the sequence is ANIPPQPL. Intrachain disulfides connect C38–C97, C52–C144, C54–C70, C69–C125, C76–C118, C86–C111, and C104–C116. Ca(2+) contacts are provided by Y53, G55, and G57. Residue H73 is part of the active site. D74 contributes to the Ca(2+) binding site. The active site involves D119.

Belongs to the phospholipase A2 family. Group I subfamily. D49 sub-subfamily. As to quaternary structure, monomer. It depends on Ca(2+) as a cofactor. Expressed by the venom gland.

It localises to the secreted. It catalyses the reaction a 1,2-diacyl-sn-glycero-3-phosphocholine + H2O = a 1-acyl-sn-glycero-3-phosphocholine + a fatty acid + H(+). Its function is as follows. Snake venom phospholipase A2 (PLA2) that shows anticoagulant and neurotoxic activities. PLA2 catalyzes the calcium-dependent hydrolysis of the 2-acyl groups in 3-sn-phosphoglycerides. This Bungarus caeruleus (Indian krait) protein is Basic phospholipase A2 KPA2.